The chain runs to 206 residues: Urease accessory protein UreG (206 aa).

14–21 (GPVGSGKT) is a binding site for GTP.

This sequence belongs to the SIMIBI class G3E GTPase family. UreG subfamily. In terms of assembly, homodimer. UreD, UreF and UreG form a complex that acts as a GTP-hydrolysis-dependent molecular chaperone, activating the urease apoprotein by helping to assemble the nickel containing metallocenter of UreC. The UreE protein probably delivers the nickel.

The protein localises to the cytoplasm. Functionally, facilitates the functional incorporation of the urease nickel metallocenter. This process requires GTP hydrolysis, probably effectuated by UreG. In Aliivibrio fischeri (strain ATCC 700601 / ES114) (Vibrio fischeri), this protein is Urease accessory protein UreG.